The primary structure comprises 304 residues: tRNA-uridine aminocarboxypropyltransferase 1 (304 aa).

S2 is subject to N-acetylserine. The DXTW signature appears at 206-209 (DSTW).

The protein belongs to the TDD superfamily. DTWD1 family.

It localises to the nucleus. It carries out the reaction a uridine in tRNA + S-adenosyl-L-methionine = a 3-[(3S)-3-amino-3-carboxypropyl]uridine in tRNA + S-methyl-5'-thioadenosine + H(+). Functionally, catalyzes the formation of 3-(3-amino-3-carboxypropyl)uridine (acp3U) at position 20 in the D-loop of several cytoplasmic tRNAs (acp3U(20)). This Pongo abelii (Sumatran orangutan) protein is tRNA-uridine aminocarboxypropyltransferase 1.